Consider the following 482-residue polypeptide: MSALTALSIASEIFPLIKTGGLADVTGALPTALKPHGIAMRTLVPGYPAVLGGIENPQQVHSFADFFGGSARLLAARCDELELLVLDAPHLYVRPGNPYVGPDGKDWPDNALRFAALAQAGAAIGQGLLLGYAPDILHAHDWQTGLVPAYLAYSGRPAPKCVFTIHNLAYQGQFPYELLTRIGLPERAFSLDGVEYYGGIGYLKAGLQLADRITTVSPTYALEIQGPDAGMGLEGLLRLRADRLSGILNGIDTRVWDPTADELIPATYDIETIGARARNKQALQSRFGLRNAPDALLYGVISRLSWQKGLDMLLDVLPGMLAEGAQLALLGAGDTPLEQGFRAAALKYPGQVGAVIGYDEALAHQIQAGADALLVPSRFEPCGLTQLCALRYGAVPVVARVGGLADTVVDANEMAIATGVATGVQFSPVTAQMLAKALTKTAALHADHAAWRNLQINGMTTDVSWKNPAQHYARLYRELIDA.

ADP-alpha-D-glucose is bound at residue lysine 18.

The protein belongs to the glycosyltransferase 1 family. Bacterial/plant glycogen synthase subfamily.

The catalysed reaction is [(1-&gt;4)-alpha-D-glucosyl](n) + ADP-alpha-D-glucose = [(1-&gt;4)-alpha-D-glucosyl](n+1) + ADP + H(+). It participates in glycan biosynthesis; glycogen biosynthesis. Functionally, synthesizes alpha-1,4-glucan chains using ADP-glucose. This chain is Glycogen synthase, found in Rhodopseudomonas palustris (strain HaA2).